The sequence spans 184 residues: ATP synthase subunit delta (184 aa).

This sequence belongs to the ATPase delta chain family. F-type ATPases have 2 components, F(1) - the catalytic core - and F(0) - the membrane proton channel. F(1) has five subunits: alpha(3), beta(3), gamma(1), delta(1), epsilon(1). F(0) has three main subunits: a(1), b(2) and c(10-14). The alpha and beta chains form an alternating ring which encloses part of the gamma chain. F(1) is attached to F(0) by a central stalk formed by the gamma and epsilon chains, while a peripheral stalk is formed by the delta and b chains.

The protein resides in the cell inner membrane. In terms of biological role, f(1)F(0) ATP synthase produces ATP from ADP in the presence of a proton or sodium gradient. F-type ATPases consist of two structural domains, F(1) containing the extramembraneous catalytic core and F(0) containing the membrane proton channel, linked together by a central stalk and a peripheral stalk. During catalysis, ATP synthesis in the catalytic domain of F(1) is coupled via a rotary mechanism of the central stalk subunits to proton translocation. Functionally, this protein is part of the stalk that links CF(0) to CF(1). It either transmits conformational changes from CF(0) to CF(1) or is implicated in proton conduction. This is ATP synthase subunit delta from Caulobacter sp. (strain K31).